We begin with the raw amino-acid sequence, 322 residues long: Breast cancer metastasis-suppressor 1-like protein (322 aa).

Positions 1–16 (MPVHSREKKESNHNDM) are enriched in basic and acidic residues. A disordered region spans residues 1-56 (MPVHSREKKESNHNDMEVDYPENEGSSSEEDDSDSSSGSEEGDSSEMDDEDCERRR). Acidic residues predominate over residues 17-51 (EVDYPENEGSSSEEDDSDSSSGSEEGDSSEMDDED). Coiled coils occupy residues 50 to 99 (EDCE…QAQE) and 147 to 178 (EKLL…ITSE).

This sequence belongs to the BRMS1 family.

The protein resides in the nucleus. Functionally, involved in the histone deacetylase (HDAC1)-dependent transcriptional repression activity. This Xenopus laevis (African clawed frog) protein is Breast cancer metastasis-suppressor 1-like protein (brms1l).